A 1093-amino-acid polypeptide reads, in one-letter code: Probable cellulose synthase A catalytic subunit 3 [UDP-forming] (1093 aa).

Over 1–280 (MEASAGLVAG…PSSQINPYRM (280 aa)) the chain is Cytoplasmic. Zn(2+) is bound by residues cysteine 39, cysteine 42, cysteine 58, cysteine 61, cysteine 66, cysteine 69, cysteine 81, and cysteine 84. The RING-type; degenerate zinc-finger motif lies at 39–85 (CQICGDDVGLNPDGEPFVACNECAFPVCRDCYEYERREGTQNCPQCK). Over residues 233 to 246 (LHQMRNDGGGKDWD) the composition is skewed to basic and acidic residues. The segment at 233–257 (LHQMRNDGGGKDWDGDGDDGDLPLM) is disordered. The helical transmembrane segment at 281-301 (VIIIRLVVLGFFFHYRVMHPV) threads the bilayer. Residues 302-303 (PD) are Extracellular-facing. The chain crosses the membrane as a helical span at residues 304–324 (AFALWLISVICEIWFAMSWIL). Topologically, residues 325–869 (DQFPKWFPIE…CLERFSYINS (545 aa)) are cytoplasmic. Residues serine 363, lysine 369, glutamate 370, and aspartate 399 each coordinate UDP-alpha-D-glucose. Residue aspartate 399 is part of the active site. A coiled-coil region spans residues 453 to 480 (VRERRAMKREYEEFKVRINALVAKAQKV). Residue lysine 540 participates in UDP-alpha-D-glucose binding. Residues lysine 541 and aspartate 565 each coordinate Mn(2+). Residue aspartate 793 is part of the active site. Residues 870–890 (IVYPFTSIPLLAYCTLPAICL) traverse the membrane as a helical segment. Over 891–902 (LTGKFITPELTN) the chain is Extracellular. Residues 903-923 (VASLWFMSLFICIFATGILEM) traverse the membrane as a helical segment. Over 924–939 (RWSGVGIDDWWRNEQF) the chain is Cytoplasmic. The helical transmembrane segment at 940–960 (WVIGGVSSHLFALFQGLLKVI) threads the bilayer. At 961 to 988 (AGIDTSFTVTSKGGDDEEFSELYTFKWT) the chain is on the extracellular side. Residues 989 to 1009 (TLLIPPTTLLLLNFIGVVAGV) traverse the membrane as a helical segment. At 1010–1020 (SNAINNGYESW) the chain is on the cytoplasmic side. Residues 1021-1041 (GPLFGKLFFAFWVIVHLYPFL) traverse the membrane as a helical segment. Over 1042 to 1050 (KGLVGRQNR) the chain is Extracellular. The chain crosses the membrane as a helical span at residues 1051-1071 (TPTIVIVWSILLASIFSLLWV). Over 1072–1093 (RIDPFLAKNDGPLLEECGLDCN) the chain is Cytoplasmic.

It belongs to the glycosyltransferase 2 family. Plant cellulose synthase subfamily. Mn(2+) is required as a cofactor. The cofactor is Zn(2+).

Its subcellular location is the cell membrane. The enzyme catalyses [(1-&gt;4)-beta-D-glucosyl](n) + UDP-alpha-D-glucose = [(1-&gt;4)-beta-D-glucosyl](n+1) + UDP + H(+). It participates in glycan metabolism; plant cellulose biosynthesis. Probable catalytic subunit of cellulose synthase terminal complexes ('rosettes'), required for beta-1,4-glucan microfibril crystallization, a major mechanism of the cell wall formation. The polypeptide is Probable cellulose synthase A catalytic subunit 3 [UDP-forming] (CESA3) (Oryza sativa subsp. japonica (Rice)).